A 507-amino-acid chain; its full sequence is Putative thymidine phosphorylase (507 aa).

Belongs to the thymidine/pyrimidine-nucleoside phosphorylase family. Type 2 subfamily.

It catalyses the reaction thymidine + phosphate = 2-deoxy-alpha-D-ribose 1-phosphate + thymine. The polypeptide is Putative thymidine phosphorylase (Ralstonia nicotianae (strain ATCC BAA-1114 / GMI1000) (Ralstonia solanacearum)).